We begin with the raw amino-acid sequence, 446 residues long: Glutamine synthetase (446 aa).

The GS beta-grasp domain maps to 18–103 (ENVRYLRLQF…LICDVYKTDG (86 aa)). Positions 110–446 (PRANLKRVLK…WERDQYMKQY (337 aa)) constitute a GS catalytic domain. Mg(2+)-binding residues include E134 and E136. E186 lines the ATP pocket. Mg(2+)-binding residues include E191 and E198. L-glutamate-binding positions include 242-243 (NG) and G243. H247 lines the Mg(2+) pocket. Residue S251 coordinates ATP. L-glutamate is bound by residues R300, E306, and R318. ATP contacts are provided by R318 and R323. E335 lines the Mg(2+) pocket. R337 contributes to the L-glutamate binding site.

This sequence belongs to the glutamine synthetase family. Oligomer of 12 subunits arranged in the form of two hexagons. In its feedback-inhibited form, interacts with TnrA in order to block its DNA-binding activity. The cofactor is Mg(2+).

Its subcellular location is the cytoplasm. The enzyme catalyses L-glutamate + NH4(+) + ATP = L-glutamine + ADP + phosphate + H(+). Its activity is regulated as follows. Inhibited by glutamine. Its function is as follows. Glutamine synthetase (GS) is an unusual multitasking protein that functions as an enzyme, a transcription coregulator, and a chaperone in ammonium assimilation and in the regulation of genes involved in nitrogen metabolism. It catalyzes the ATP-dependent biosynthesis of glutamine from glutamate and ammonia. Feedback-inhibited GlnA also interacts with and regulates the activity of the transcriptional regulator TnrA. During nitrogen limitation, TnrA is in its DNA-binding active state and turns on the transcription of genes required for nitrogen assimilation. Under conditions of nitrogen excess, feedback-inhibited GlnA forms a stable complex with TnrA, which inhibits its DNA-binding activity. In contrast, feedback-inhibited GlnA acts as a chaperone to stabilize the DNA-binding activity of GlnR, which represses the transcription of nitrogen assimilation genes. This is Glutamine synthetase from Staphylococcus aureus (strain MRSA252).